We begin with the raw amino-acid sequence, 257 residues long: BTB/POZ domain-containing protein kctd15-like (257 aa).

A phosphoserine mark is found at Ser9 and Ser12. Positions Ala30–Glu100 constitute a BTB domain.

This is BTB/POZ domain-containing protein kctd15-like (kctd15l) from Danio rerio (Zebrafish).